Consider the following 103-residue polypeptide: Isocitrate dehydrogenase [NAD] subunit beta, mitochondrial (103 aa).

The protein belongs to the isocitrate and isopropylmalate dehydrogenases family. As to quaternary structure, heterooligomer of subunits alpha (IDH3A), beta (IDH3B), and gamma (IDH3G) in the apparent ratio of 2:1:1. The heterodimer containing one IDH3A and one IDH3B subunit and the heterodimer containing one IDH3A and one IDH3G subunit assemble into a heterotetramer (which contains two subunits of IDH3A, one of IDH3B and one of IDH3G) and further into the heterooctamer.

The protein localises to the mitochondrion. With respect to regulation, the heterotetramer and the heterodimer composed of IDH3A and IDH3G subunits can be allosterically activated by citrate (CIT) or/and ADP, and the two activators can act independently or synergistically. The heterodimer composed of IDH3A and IDH3B subunits cannot be allosterically regulated and the allosteric regulation of the heterotetramer is through the IDH3G subunit and not the IDH3B subunit. The IDH3G subunit contains the allosteric site which consists of a CIT-binding site and an ADP-binding site, and the binding of CIT and ADP causes conformational changes at the allosteric site which are transmitted to the active site in the catalytic subunit (IDH3A) through a cascade of conformational changes at the heterodimer interface, leading to stabilization of the isocitrate-binding at the active site and thus activation of the enzyme. ATP can activate the heterotetramer and the heterodimer composed of IDH3A and IDH3G subunits at low concentrations but inhibits their activities at high concentrations, whereas ATP exhibits only inhibitory effect on the heterodimer composed of IDH3A and IDH3B subunits. Functionally, plays a structural role to facilitate the assembly and ensure the full activity of the enzyme catalyzing the decarboxylation of isocitrate (ICT) into alpha-ketoglutarate. The heterodimer composed of the alpha (IDH3A) and beta (IDH3B) subunits and the heterodimer composed of the alpha (IDH3A) and gamma (IDH3G) subunits, have considerable basal activity but the full activity of the heterotetramer (containing two subunits of IDH3A, one of IDH3B and one of IDH3G) requires the assembly and cooperative function of both heterodimers. The chain is Isocitrate dehydrogenase [NAD] subunit beta, mitochondrial (IDH3B) from Sus scrofa (Pig).